Consider the following 283-residue polypeptide: Bifunctional protein FolD (283 aa).

Residues G166–S168, S191, and I232 each bind NADP(+).

Belongs to the tetrahydrofolate dehydrogenase/cyclohydrolase family. As to quaternary structure, homodimer.

The catalysed reaction is (6R)-5,10-methylene-5,6,7,8-tetrahydrofolate + NADP(+) = (6R)-5,10-methenyltetrahydrofolate + NADPH. The enzyme catalyses (6R)-5,10-methenyltetrahydrofolate + H2O = (6R)-10-formyltetrahydrofolate + H(+). Its pathway is one-carbon metabolism; tetrahydrofolate interconversion. Catalyzes the oxidation of 5,10-methylenetetrahydrofolate to 5,10-methenyltetrahydrofolate and then the hydrolysis of 5,10-methenyltetrahydrofolate to 10-formyltetrahydrofolate. This chain is Bifunctional protein FolD, found in Chromobacterium violaceum (strain ATCC 12472 / DSM 30191 / JCM 1249 / CCUG 213 / NBRC 12614 / NCIMB 9131 / NCTC 9757 / MK).